The chain runs to 212 residues: Molybdenum cofactor guanylyltransferase (212 aa).

Residues 14-16, K27, N55, D73, and D108 contribute to the GTP site; that span reads LAG. D108 is a Mg(2+) binding site.

Belongs to the MobA family. Monomer. Mg(2+) is required as a cofactor.

The protein localises to the cytoplasm. The catalysed reaction is Mo-molybdopterin + GTP + H(+) = Mo-molybdopterin guanine dinucleotide + diphosphate. Its function is as follows. Transfers a GMP moiety from GTP to Mo-molybdopterin (Mo-MPT) cofactor (Moco or molybdenum cofactor) to form Mo-molybdopterin guanine dinucleotide (Mo-MGD) cofactor. The sequence is that of Molybdenum cofactor guanylyltransferase from Bradyrhizobium sp. (strain ORS 278).